The following is a 585-amino-acid chain: A-type ATP synthase subunit A (585 aa).

Residues 192 to 211 are disordered; that stretch reads MRQEWPVREPRPTVEKKTPR. Over residues 196–211 the composition is skewed to basic and acidic residues; that stretch reads WPVREPRPTVEKKTPR. 237–244 contributes to the ATP binding site; it reads GPFGSGKT.

Belongs to the ATPase alpha/beta chains family. In terms of assembly, has multiple subunits with at least A(3), B(3), C, D, E, F, H, I and proteolipid K(x).

The protein resides in the cell membrane. It carries out the reaction ATP + H2O + 4 H(+)(in) = ADP + phosphate + 5 H(+)(out). Component of the A-type ATP synthase that produces ATP from ADP in the presence of a proton gradient across the membrane. The A chain is the catalytic subunit. The sequence is that of A-type ATP synthase subunit A from Haloquadratum walsbyi (strain DSM 16790 / HBSQ001).